The primary structure comprises 222 residues: Probable pyridoxal 5'-phosphate synthase subunit SNO2 (222 aa).

58–60 (GES) is an L-glutamine binding site. The active-site Nucleophile is the cysteine 91. L-glutamine is bound by residues arginine 120 and 151–152 (IR). Active-site charge relay system residues include histidine 197 and glutamate 199.

It belongs to the glutaminase PdxT/SNO family.

The enzyme catalyses aldehydo-D-ribose 5-phosphate + D-glyceraldehyde 3-phosphate + L-glutamine = pyridoxal 5'-phosphate + L-glutamate + phosphate + 3 H2O + H(+). It catalyses the reaction L-glutamine + H2O = L-glutamate + NH4(+). The protein operates within cofactor biosynthesis; pyridoxal 5'-phosphate biosynthesis. In terms of biological role, catalyzes the hydrolysis of glutamine to glutamate and ammonia as part of the biosynthesis of pyridoxal 5'-phosphate. The resulting ammonia molecule is channeled to the active site of a SNZ isoform. This is Probable pyridoxal 5'-phosphate synthase subunit SNO2 (SNO2) from Saccharomyces cerevisiae (strain ATCC 204508 / S288c) (Baker's yeast).